The primary structure comprises 180 residues: Crossover junction endodeoxyribonuclease RuvC (180 aa).

Catalysis depends on residues aspartate 7, glutamate 66, and aspartate 138. Aspartate 7, glutamate 66, and aspartate 138 together coordinate Mg(2+).

This sequence belongs to the RuvC family. Homodimer which binds Holliday junction (HJ) DNA. The HJ becomes 2-fold symmetrical on binding to RuvC with unstacked arms; it has a different conformation from HJ DNA in complex with RuvA. In the full resolvosome a probable DNA-RuvA(4)-RuvB(12)-RuvC(2) complex forms which resolves the HJ. The cofactor is Mg(2+).

It is found in the cytoplasm. It carries out the reaction Endonucleolytic cleavage at a junction such as a reciprocal single-stranded crossover between two homologous DNA duplexes (Holliday junction).. Functionally, the RuvA-RuvB-RuvC complex processes Holliday junction (HJ) DNA during genetic recombination and DNA repair. Endonuclease that resolves HJ intermediates. Cleaves cruciform DNA by making single-stranded nicks across the HJ at symmetrical positions within the homologous arms, yielding a 5'-phosphate and a 3'-hydroxyl group; requires a central core of homology in the junction. The consensus cleavage sequence is 5'-(A/T)TT(C/G)-3'. Cleavage occurs on the 3'-side of the TT dinucleotide at the point of strand exchange. HJ branch migration catalyzed by RuvA-RuvB allows RuvC to scan DNA until it finds its consensus sequence, where it cleaves and resolves the cruciform DNA. The polypeptide is Crossover junction endodeoxyribonuclease RuvC (Burkholderia multivorans (strain ATCC 17616 / 249)).